We begin with the raw amino-acid sequence, 349 residues long: Short chain dehydrogenase/reductase dpfgH (349 aa).

The chain crosses the membrane as a helical span at residues 9–31 (LCIRVVDSLYGSFLYLPLAILFL). Residues Ile-65, Arg-89, and Asp-115 each contribute to the NADP(+) site. A glycan (N-linked (GlcNAc...) asparagine) is linked at Asn-118. Residues Asn-142 and Lys-164 each contribute to the NADP(+) site. Active-site proton donor residues include Ser-191 and Ser-192. NADP(+) is bound by residues Tyr-223 and Lys-227. Residue Tyr-223 is the Proton acceptor of the active site. Residue Lys-227 is the Lowers pKa of active site Tyr of the active site. N-linked (GlcNAc...) asparagine glycosylation is present at Asn-334.

This sequence belongs to the short-chain dehydrogenases/reductases (SDR) family.

It is found in the membrane. It participates in secondary metabolite biosynthesis; terpenoid biosynthesis. Its function is as follows. Short chain dehydrogenase/reductase; part of the gene cluster that mediates the biosynthesis of diterpenoid pyrones. The first step of the pathway is the synthesis of the alpha-pyrone moiety by the polyketide synthase dpfgA via condensation of one acetyl-CoA starter unit with 3 malonyl-CoA units and 2 methylations. The alpha-pyrone is then combined with geranylgeranyl pyrophosphate (GGPP) formed by the GGPP synthase dpfgD through the action of the prenyltransferase dpfgC to yield a linear alpha-pyrone diterpenoid. Subsequent steps in the diterpenoid pyrone biosynthetic pathway involve the decalin core formation, which is initiated by the epoxidation of the C10-C11 olefin by the FAD-dependent oxidoreductase dpfgE, and is followed by a cyclization cascade catalyzed by the terpene cyclase dpfgB. The short chain dehydrogenase/reductase dpfgG then oxidizes the 8S hydroxy group to a ketone and the short chain dehydrogenase/reductase dpfgH reduces the ketone to the 8R hydroxy group to yield higginsianin B. Higginsianin B is further methylated by the methyltransferase dpfgI to produce the intermediate named FDDP B. The cytochrome P450 monooxygenase dfgpJ then catalyzes a three-step oxidation at C-27 to generate a carboxylic acid as well as C-26 hydroxylation. Finally, methyltransferase dpfgK methylates the carboxylic acid generated by dpfgJ, yielding the final diterpenoid pyrones from the pathway which were named FDDP D and FDDP E. This chain is Short chain dehydrogenase/reductase dpfgH, found in Gibberella zeae (strain ATCC MYA-4620 / CBS 123657 / FGSC 9075 / NRRL 31084 / PH-1) (Wheat head blight fungus).